The sequence spans 189 residues: Peptidyl-tRNA hydrolase (189 aa).

Tyr-15 is a tRNA binding site. The active-site Proton acceptor is the His-20. TRNA contacts are provided by Phe-66, Asn-68, and Asn-114.

Belongs to the PTH family. In terms of assembly, monomer.

Its subcellular location is the cytoplasm. The catalysed reaction is an N-acyl-L-alpha-aminoacyl-tRNA + H2O = an N-acyl-L-amino acid + a tRNA + H(+). Its function is as follows. Hydrolyzes ribosome-free peptidyl-tRNAs (with 1 or more amino acids incorporated), which drop off the ribosome during protein synthesis, or as a result of ribosome stalling. In terms of biological role, catalyzes the release of premature peptidyl moieties from peptidyl-tRNA molecules trapped in stalled 50S ribosomal subunits, and thus maintains levels of free tRNAs and 50S ribosomes. In Streptococcus mutans serotype c (strain ATCC 700610 / UA159), this protein is Peptidyl-tRNA hydrolase.